The following is a 440-amino-acid chain: Glutamyl-tRNA reductase (440 aa).

Substrate-binding positions include 40–43, S100, 105–107, and Q111; these read TCNR and ERE. The active-site Nucleophile is the C41. 181 to 186 provides a ligand contact to NADP(+); sequence GTGAYA.

Belongs to the glutamyl-tRNA reductase family. As to quaternary structure, homodimer.

The enzyme catalyses (S)-4-amino-5-oxopentanoate + tRNA(Glu) + NADP(+) = L-glutamyl-tRNA(Glu) + NADPH + H(+). It functions in the pathway porphyrin-containing compound metabolism; protoporphyrin-IX biosynthesis; 5-aminolevulinate from L-glutamyl-tRNA(Glu): step 1/2. Its function is as follows. Catalyzes the NADPH-dependent reduction of glutamyl-tRNA(Glu) to glutamate 1-semialdehyde (GSA). The polypeptide is Glutamyl-tRNA reductase (Renibacterium salmoninarum (strain ATCC 33209 / DSM 20767 / JCM 11484 / NBRC 15589 / NCIMB 2235)).